The primary structure comprises 485 residues: Terminase, large subunit (485 aa).

ATP-binding residues include Q97 and Q99. The short motif at 124 to 131 (TSEFRGKS) is the Walker A motif element. The Walker B motif motif lies at 145 to 150 (FVILDE). The For ATPase activity role is filled by E150. Residues 256 to 438 (SNSVFSGLDM…DIVMSLALAY (183 aa)) are nuclease. Mg(2+)-binding residues include D294, D347, and D429.

Belongs to the Tequatrovirus large terminase family. In terms of assembly, interacts with the terminase small subunit; the active complex is probably heterooligomeric. Interacts with the portal protein. The cofactor is Mg(2+).

Functionally, the terminase large subunit acts as an ATP driven molecular motor necessary for viral DNA translocation into empty capsids and as an endonuclease that cuts the viral genome to initiate and to end a packaging reaction The terminase lies at a unique vertex of the procapsid and is composed of two subunits, a small terminase subunit involved in viral DNA recognition (packaging sequence), and a large terminase subunit possessing endonucleolytic and ATPase activities. Both terminase subunits heterooligomerize and are docked on the portal protein to form the packaging machine. The terminase large subunit exhibits endonuclease activity and cleaves the viral genome concatemer. Once the capsid is packaged with the DNA, the terminase complex is substituted by the tail. The chain is Terminase, large subunit from Thermus thermophilus (Thermus thermophilus phage G20c).